We begin with the raw amino-acid sequence, 807 residues long: Leucine--tRNA ligase (807 aa).

The short motif at 40–51 (PYPSGSGLHVGH) is the 'HIGH' region element. The 'KMSKS' region signature appears at 576-580 (KMSKS). Lys-579 serves as a coordination point for ATP.

The protein belongs to the class-I aminoacyl-tRNA synthetase family.

The protein resides in the cytoplasm. The catalysed reaction is tRNA(Leu) + L-leucine + ATP = L-leucyl-tRNA(Leu) + AMP + diphosphate. The polypeptide is Leucine--tRNA ligase (Chlorobaculum tepidum (strain ATCC 49652 / DSM 12025 / NBRC 103806 / TLS) (Chlorobium tepidum)).